The chain runs to 211 residues: ATP-dependent dethiobiotin synthetase BioD (211 aa).

Residue 13 to 18 coordinates ATP; sequence GVGKTV. Thr-17 lines the Mg(2+) pocket. Lys-33 is a catalytic residue. Mg(2+)-binding residues include Cys-47 and Glu-101. ATP contacts are provided by residues 101–104, 185–187, and Asn-192; these read EGAG and PWL.

It belongs to the dethiobiotin synthetase family. As to quaternary structure, homodimer. Requires Mg(2+) as cofactor.

Its subcellular location is the cytoplasm. It carries out the reaction (7R,8S)-7,8-diammoniononanoate + CO2 + ATP = (4R,5S)-dethiobiotin + ADP + phosphate + 3 H(+). The protein operates within cofactor biosynthesis; biotin biosynthesis; biotin from 7,8-diaminononanoate: step 1/2. Its function is as follows. Catalyzes a mechanistically unusual reaction, the ATP-dependent insertion of CO2 between the N7 and N8 nitrogen atoms of 7,8-diaminopelargonic acid (DAPA, also called 7,8-diammoniononanoate) to form a ureido ring. The sequence is that of ATP-dependent dethiobiotin synthetase BioD from Bradyrhizobium diazoefficiens (strain JCM 10833 / BCRC 13528 / IAM 13628 / NBRC 14792 / USDA 110).